The primary structure comprises 632 residues: Epsin-3 (632 aa).

Arginine 8, lysine 11, arginine 25, asparagine 30, arginine 63, and histidine 73 together coordinate a 1,2-diacyl-sn-glycero-3-phospho-(1D-myo-inositol-4,5-bisphosphate). The ENTH domain occupies 12-144 (NIVHNYSEAE…KDEERLRQER (133 aa)). The tract at residues 172-214 (YGEDYSRSRGSPSSYNSSSSSPRYTSDLEQARPQTSGEEELQL) is disordered. The segment covering 179 to 196 (SRGSPSSYNSSSSSPRYT) has biased composition (low complexity). 2 positions are modified to phosphoserine: serine 191 and serine 192. UIM domains are found at residues 209-228 (EEELQLQLALAMSREEAEKP) and 236-255 (DEDLQLQLALRLSRQEHEKE). The interval 257 to 296 (RSWQGDGSPMANGAGAVVHHQRDREPEREERKEEEKLKTS) is disordered. Serine 264 is subject to Phosphoserine. Basic and acidic residues predominate over residues 276 to 294 (HQRDREPEREERKEEEKLK). A run of 8 repeats spans residues 321–323 (DPW), 344–346 (DPW), 371–373 (EPW), 387–389 (DPW), 404–406 (DPW), 524–526 (NPF), 537–539 (NPF), and 629–631 (NPF). The tract at residues 321-406 (DPWDIPGFRP…KLPSTGADPW (86 aa)) is 5 X 3 AA repeats of [DE]-P-W. Disordered stretches follow at residues 326-501 (PGFR…SFLG), 525-560 (PFLTGLSAPSPTNPFGAGEPGRPTLNQMRTGSPALG), and 604-632 (AFAPQPLLPTPSSAGPRPPPPQTGTNPFL). Residues 353 to 371 (TVLSRSQPWDLTPMLSSSE) are compositionally biased toward polar residues. Residues 524–631 (NPFLTGLSAP…PPPQTGTNPF (108 aa)) are 3 X 3 AA repeats of N-P-F.

This sequence belongs to the epsin family. As to expression, detected in migrating keratinocytes from wounded skin, but not in differentiating keratinocytes or in normal skin. Detected in chronic wounds, basal cell carcinoma and ulcerative colitis.

The protein resides in the cytoplasm. It is found in the perinuclear region. It localises to the cytoplasmic vesicle. Its subcellular location is the clathrin-coated vesicle. The protein localises to the nucleus. The protein is Epsin-3 (EPN3) of Homo sapiens (Human).